A 55-amino-acid chain; its full sequence is Large ribosomal subunit protein bL33 (55 aa).

This sequence belongs to the bacterial ribosomal protein bL33 family.

This Campylobacter fetus subsp. fetus (strain 82-40) protein is Large ribosomal subunit protein bL33.